We begin with the raw amino-acid sequence, 329 residues long: ADP-L-glycero-D-manno-heptose-6-epimerase (329 aa).

NADP(+) contacts are provided by residues 10-11 (FI), 31-32 (DD), Lys-38, Lys-53, 74-78 (QGACS), and Asn-91. Tyr-138 serves as the catalytic Proton acceptor. Residue Lys-142 coordinates NADP(+). Asn-167 lines the substrate pocket. NADP(+)-binding residues include Val-168 and Lys-176. Residue Lys-176 is the Proton acceptor of the active site. Substrate-binding positions include Arg-178, His-185, 199–202 (FAGW), Arg-212, and Tyr-291.

This sequence belongs to the NAD(P)-dependent epimerase/dehydratase family. HldD subfamily. Homopentamer. NADP(+) is required as a cofactor.

The catalysed reaction is ADP-D-glycero-beta-D-manno-heptose = ADP-L-glycero-beta-D-manno-heptose. It functions in the pathway nucleotide-sugar biosynthesis; ADP-L-glycero-beta-D-manno-heptose biosynthesis; ADP-L-glycero-beta-D-manno-heptose from D-glycero-beta-D-manno-heptose 7-phosphate: step 4/4. It participates in bacterial outer membrane biogenesis; LPS core biosynthesis. Its function is as follows. Catalyzes the interconversion between ADP-D-glycero-beta-D-manno-heptose and ADP-L-glycero-beta-D-manno-heptose via an epimerization at carbon 6 of the heptose. This Bordetella parapertussis (strain 12822 / ATCC BAA-587 / NCTC 13253) protein is ADP-L-glycero-D-manno-heptose-6-epimerase.